The chain runs to 1020 residues: Glycine dehydrogenase (decarboxylating), mitochondrial (1020 aa).

The N-terminal 35 residues, M1–R35, are a transit peptide targeting the mitochondrion. Positions R21 to A46 are disordered. N6-acetyllysine is present on residues K447, K514, K648, and K664. At K754 the chain carries N6-(pyridoxal phosphate)lysine.

It belongs to the GcvP family. As to quaternary structure, homodimer. Interacts with GCSH. The glycine cleavage system is composed of four proteins: P (GLDC), T (GCST), L (DLD) and H (GCSH). The cofactor is pyridoxal 5'-phosphate.

It localises to the mitochondrion. The enzyme catalyses N(6)-[(R)-lipoyl]-L-lysyl-[glycine-cleavage complex H protein] + glycine + H(+) = N(6)-[(R)-S(8)-aminomethyldihydrolipoyl]-L-lysyl-[glycine-cleavage complex H protein] + CO2. Stimulated by lipoic acid. Inhibited in presence of methylamine. Its function is as follows. The glycine cleavage system catalyzes the degradation of glycine. The P protein (GLDC) binds the alpha-amino group of glycine through its pyridoxal phosphate cofactor; CO(2) is released and the remaining methylamine moiety is then transferred to the lipoamide cofactor of the H protein (GCSH). In Homo sapiens (Human), this protein is Glycine dehydrogenase (decarboxylating), mitochondrial.